Reading from the N-terminus, the 113-residue chain is MEDLSTMQCEACRPEAPRVSEDEIRELHPQVPDWEIIEEDEVRRLQRVFKFGNFAEALDFTNKTGALAEEAGHHPAILTEYGQVTVTWWSHKIKGLHKNDFIMAAKTDQLLKH.

It belongs to the pterin-4-alpha-carbinolamine dehydratase family.

The enzyme catalyses (4aS,6R)-4a-hydroxy-L-erythro-5,6,7,8-tetrahydrobiopterin = (6R)-L-erythro-6,7-dihydrobiopterin + H2O. The protein is Putative pterin-4-alpha-carbinolamine dehydratase of Nitrosococcus oceani (strain ATCC 19707 / BCRC 17464 / JCM 30415 / NCIMB 11848 / C-107).